The following is a 409-amino-acid chain: MRIYKVGGAVRDRLLGRPVTDIDWVVVGASAEEMLAKGFRPVGADFPVFLHPKSGEEYALARTERKSGRGYSGFTFHASPEVTLEEDLIRRDLTINAMAEDEQGRLTDPYNGQKDLEERLLRHVSPAFAEDPLRVLRVARFAARYAGLGFRVAPETLELMRELSESGELQALTAERSWKEISRALMEDQPQVFIQVLRDCGALAVLMPEIDALFGVPQPAVHHPEIDTGAHTLSVLLQAALHQQPLSVRWACLLHDLGKGLTPEEEWPRHIGHERTGLELIKAVNERFKAPRECQELALLVGQYHTHGHKALELKASTLLELLQSFDVFRRPQRFEEFIAACEMDARGRLGLESRPYPQADYLRGAAEAARKVAVQPLLEQGFKGPQLGEALRLERLKAIKAYKEQHAP.

ATP is bound by residues Gly-8 and Arg-11. Positions 8 and 11 each coordinate CTP. Asp-21 and Asp-23 together coordinate Mg(2+). ATP contacts are provided by Arg-91, Arg-137, and Arg-140. Residues Arg-91, Arg-137, and Arg-140 each coordinate CTP. One can recognise an HD domain in the interval 228-329 (TGAHTLSVLL…LELLQSFDVF (102 aa)).

Belongs to the tRNA nucleotidyltransferase/poly(A) polymerase family. Bacterial CCA-adding enzyme type 1 subfamily. Monomer. Can also form homodimers and oligomers. Mg(2+) serves as cofactor. Requires Ni(2+) as cofactor.

It carries out the reaction a tRNA precursor + 2 CTP + ATP = a tRNA with a 3' CCA end + 3 diphosphate. The enzyme catalyses a tRNA with a 3' CCA end + 2 CTP + ATP = a tRNA with a 3' CCACCA end + 3 diphosphate. Catalyzes the addition and repair of the essential 3'-terminal CCA sequence in tRNAs without using a nucleic acid template. Adds these three nucleotides in the order of C, C, and A to the tRNA nucleotide-73, using CTP and ATP as substrates and producing inorganic pyrophosphate. tRNA 3'-terminal CCA addition is required both for tRNA processing and repair. Also involved in tRNA surveillance by mediating tandem CCA addition to generate a CCACCA at the 3' terminus of unstable tRNAs. While stable tRNAs receive only 3'-terminal CCA, unstable tRNAs are marked with CCACCA and rapidly degraded. In Pseudomonas fluorescens (strain ATCC BAA-477 / NRRL B-23932 / Pf-5), this protein is Multifunctional CCA protein.